The chain runs to 655 residues: FYVE, RhoGEF and PH domain-containing protein 2 (655 aa).

Phosphoserine is present on residues serine 10, serine 39, and serine 47. 2 disordered regions span residues 21–52 (NRTP…EPWE) and 84–103 (WRRS…EPEE). Positions 32-41 (SLEDQPHSPE) are enriched in basic and acidic residues. Residues 102-290 (EEKRVVRELL…FSAAQHSNAA (189 aa)) enclose the DH domain. Positions 319–418 (TLLREGPVLK…WMQACQAAID (100 aa)) constitute a PH 1 domain. An FYVE-type zinc finger spans residues 458 to 518 (DKMVTMCMRC…VCLTCYTFLT (61 aa)). 8 residues coordinate Zn(2+): cysteine 464, cysteine 467, cysteine 481, cysteine 484, cysteine 489, cysteine 492, cysteine 510, and cysteine 513. In terms of domain architecture, PH 2 spans 544 to 641 (QSLVCSFLQL…WVTAIKRAAS (98 aa)). At threonine 644 the chain carries Phosphothreonine. A Phosphoserine modification is found at serine 654.

As to expression, lymph node, spleen, B-lymphocytes and macrophages (at protein level). Expressed at high levels in lymph node, spleen, B-lymphocytes and bone marrow macrophages. Expressed at lower levels in mature bone marrow dendritic cells. In both immature and mature B-cells, expression is down-regulated by prior B-cell receptor signaling. Expression remains high in resting B and memory cells but declines upon differentiation into plasma cells.

The protein localises to the cytoplasm. Its subcellular location is the nucleus. It is found in the early endosome. It localises to the early endosome membrane. The protein resides in the cell projection. The protein localises to the ruffle membrane. Its subcellular location is the cytoskeleton. Functionally, activates CDC42, a member of the Ras-like family of Rho- and Rac proteins, by exchanging bound GDP for free GTP. Activates JNK1 via CDC42 but not RAC1. Binds to phosphatidylinositol 4,5-bisphosphate, phosphatidylinositol 3,4,5-trisphosphate, phosphatidylinositol 5-monophosphate, phosphatidylinositol 4-monophosphate and phosphatidylinositol 3-monophosphate. In Mus musculus (Mouse), this protein is FYVE, RhoGEF and PH domain-containing protein 2 (Fgd2).